The chain runs to 357 residues: Alanine racemase (357 aa).

Lys-33 acts as the Proton acceptor; specific for D-alanine in catalysis. Lys-33 carries the N6-(pyridoxal phosphate)lysine modification. Substrate is bound at residue Arg-130. Tyr-252 functions as the Proton acceptor; specific for L-alanine in the catalytic mechanism. Position 300 (Met-300) interacts with substrate.

It belongs to the alanine racemase family. Requires pyridoxal 5'-phosphate as cofactor.

The catalysed reaction is L-alanine = D-alanine. Its pathway is amino-acid biosynthesis; D-alanine biosynthesis; D-alanine from L-alanine: step 1/1. Functionally, catalyzes the interconversion of L-alanine and D-alanine. May also act on other amino acids. The chain is Alanine racemase (alr) from Acidiphilium cryptum (strain JF-5).